The primary structure comprises 175 residues: Ribosome maturation factor RimM (175 aa).

The region spanning 98-172 is the PRC barrel domain; it reads DGEFHVRDLQ…WLLITPPKGL (75 aa).

Belongs to the RimM family. In terms of assembly, binds ribosomal protein uS19.

It localises to the cytoplasm. Functionally, an accessory protein needed during the final step in the assembly of 30S ribosomal subunit, possibly for assembly of the head region. Essential for efficient processing of 16S rRNA. May be needed both before and after RbfA during the maturation of 16S rRNA. It has affinity for free ribosomal 30S subunits but not for 70S ribosomes. In Synechococcus sp. (strain RCC307), this protein is Ribosome maturation factor RimM.